The primary structure comprises 177 residues: Large ribosomal subunit protein uL5 (177 aa).

Belongs to the universal ribosomal protein uL5 family. Part of the 50S ribosomal subunit; part of the 5S rRNA/L5/L18/L25 subcomplex. Contacts the 5S rRNA and the P site tRNA. Forms a bridge to the 30S subunit in the 70S ribosome.

Its function is as follows. This is one of the proteins that bind and probably mediate the attachment of the 5S RNA into the large ribosomal subunit, where it forms part of the central protuberance. In the 70S ribosome it contacts protein S13 of the 30S subunit (bridge B1b), connecting the 2 subunits; this bridge is implicated in subunit movement. Contacts the P site tRNA; the 5S rRNA and some of its associated proteins might help stabilize positioning of ribosome-bound tRNAs. The polypeptide is Large ribosomal subunit protein uL5 (Anaplasma phagocytophilum (strain HZ)).